A 1142-amino-acid polypeptide reads, in one-letter code: ABC transporter F family member 4 (1142 aa).

Positions 1 to 564 are disordered; that stretch reads MGPKGKKKGQ…EDAFELAKKK (564 aa). Composition is skewed to low complexity over residues 121–143, 153–166, and 182–195; these read PQPVKKGGKPAPQKKGGKQQQQQ and PQPVKKGGKPAPQK. Acidic residues-rich tracts occupy residues 203–212 and 233–244; these read SEDEDEEDEV and EEEEEEEEEEIE. Composition is skewed to basic residues over residues 249–261 and 280–290; these read KGGKAPKPKKGGK and KGGKKDKKKGS. The span at 295–306 shows a compositional bias: acidic residues; that stretch reads EEEEEEEEEEIE. The segment covering 314–328 has biased composition (basic and acidic residues); it reads NKKDQKKGGKGKHVE. Acidic residues predominate over residues 329–340; it reads EEEEEEEEEEIE. The span at 377–387 shows a compositional bias: basic residues; sequence KGGKKDKKKGS. 2 stretches are compositionally biased toward acidic residues: residues 392–404 and 441–451; these read EEEEEEEEEEEIE and EEEEQEQEEEE. The segment covering 456–467 has biased composition (basic residues); the sequence is SKSNKKDKKKGK. Acidic residues predominate over residues 471 to 480; the sequence is EEEEEEEEEE. Residues 485 to 496 show a composition bias toward basic residues; that stretch reads SKSNKKDKKKGS. Acidic residues predominate over residues 501 to 518; the sequence is EEEEEEEEEEEEEKEEEE. Positions 530–548 are enriched in basic residues; the sequence is AKKVKKVDKKEKKKEKEKK. ABC transporter domains lie at 604–857 and 923–1139; these read IKFD…RSKE and LVFK…DNMV. ATP-binding positions include 636-643 and 956-963; these read GRNGIGKS and GMNGVGKS.

This sequence belongs to the ABC transporter superfamily.

In Dictyostelium discoideum (Social amoeba), this protein is ABC transporter F family member 4 (abcF4).